The sequence spans 458 residues: RuvB-like helicase 1 (458 aa).

Positions 1–18 (MVQITEVKENQSSRESRT) are enriched in basic and acidic residues. The interval 1–20 (MVQITEVKENQSSRESRTAA) is disordered. 73–80 (GPPATGKT) is a binding site for ATP.

This sequence belongs to the RuvB family. May form heterododecamers with RVB2. Component of the SWR1 chromatin remodeling complex, the INO80 chromatin remodeling complex, and of the R2TP complex.

Its subcellular location is the nucleus. The enzyme catalyses ATP + H2O = ADP + phosphate + H(+). Functionally, DNA helicase which participates in several chromatin remodeling complexes, including the SWR1 and the INO80 complexes. The SWR1 complex mediates the ATP-dependent exchange of histone H2A for the H2A variant HZT1 leading to transcriptional regulation of selected genes by chromatin remodeling. The INO80 complex remodels chromatin by shifting nucleosomes and is involved in DNA repair. Also involved in pre-rRNA processing. The sequence is that of RuvB-like helicase 1 (RVB1) from Candida albicans (strain SC5314 / ATCC MYA-2876) (Yeast).